Here is a 524-residue protein sequence, read N- to C-terminus: 2-isopropylmalate synthase (524 aa).

In terms of domain architecture, Pyruvate carboxyltransferase spans 12-274 (VIIFDTTLRD…WNRIETTMLT (263 aa)). Positions 21, 209, 211, and 245 each coordinate Mn(2+). Residues 398 to 524 (KLMSLTVIAG…EDAPTVAVAG (127 aa)) form a regulatory domain region.

This sequence belongs to the alpha-IPM synthase/homocitrate synthase family. LeuA type 1 subfamily. Homodimer. The cofactor is Mn(2+).

The protein resides in the cytoplasm. It carries out the reaction 3-methyl-2-oxobutanoate + acetyl-CoA + H2O = (2S)-2-isopropylmalate + CoA + H(+). It functions in the pathway amino-acid biosynthesis; L-leucine biosynthesis; L-leucine from 3-methyl-2-oxobutanoate: step 1/4. Functionally, catalyzes the condensation of the acetyl group of acetyl-CoA with 3-methyl-2-oxobutanoate (2-ketoisovalerate) to form 3-carboxy-3-hydroxy-4-methylpentanoate (2-isopropylmalate). This Rhodopseudomonas palustris (strain TIE-1) protein is 2-isopropylmalate synthase.